A 612-amino-acid chain; its full sequence is Transcription factor ffsR (612 aa).

Over residues 1 to 12 (MDTLTAPTTQSE) the composition is skewed to polar residues. Residues 1 to 21 (MDTLTAPTTQSEQPPPPLTAS) are disordered. A DNA-binding region (zn(2)-C6 fungal-type) is located at residues 28-60 (CDRCRSHKLRCNRDLMTSTNSPCQRCRKARVKC). The span at 73 to 82 (EELKNGENVH) shows a compositional bias: basic and acidic residues. Disordered regions lie at residues 73–130 (EELK…SMSG), 154–249 (DGST…VTSS), and 451–470 (GQGP…TTTN). Polar residues-rich tracts occupy residues 92–103 (SHRTASTPSNHA), 154–169 (DGST…TNGS), and 238–249 (LTQQHPAGVTSS). Over residues 458–470 (PSQGSSSRSTTTN) the composition is skewed to low complexity.

It is found in the nucleus. Functionally, transcription factor that specifically regulates the expression of the gene cluster that mediates the biosynthesis of the cytotoxic leucine-containing cytochalasans, including aspochalasin C, aspochalasin E, TMC-169, flavichalasine F, aspergillin PZ, aspochalasin M and flavichalasine G. The polypeptide is Transcription factor ffsR (Aspergillus flavipes).